A 162-amino-acid chain; its full sequence is NADH-quinone oxidoreductase subunit I (162 aa).

2 4Fe-4S ferredoxin-type domains span residues 52–82 (LRRYPNGEERCIACKLCEAICPAQAITIEAG) and 93–122 (TRYDIDMVKCIYCGFCQEACPVDAIVEGPN). Positions 62, 65, 68, 72, 102, 105, 108, and 112 each coordinate [4Fe-4S] cluster.

Belongs to the complex I 23 kDa subunit family. As to quaternary structure, NDH-1 is composed of 14 different subunits. Subunits NuoA, H, J, K, L, M, N constitute the membrane sector of the complex. It depends on [4Fe-4S] cluster as a cofactor.

Its subcellular location is the cell inner membrane. The catalysed reaction is a quinone + NADH + 5 H(+)(in) = a quinol + NAD(+) + 4 H(+)(out). In terms of biological role, NDH-1 shuttles electrons from NADH, via FMN and iron-sulfur (Fe-S) centers, to quinones in the respiratory chain. The immediate electron acceptor for the enzyme in this species is believed to be ubiquinone. Couples the redox reaction to proton translocation (for every two electrons transferred, four hydrogen ions are translocated across the cytoplasmic membrane), and thus conserves the redox energy in a proton gradient. The sequence is that of NADH-quinone oxidoreductase subunit I from Xanthobacter autotrophicus (strain ATCC BAA-1158 / Py2).